A 267-amino-acid chain; its full sequence is Undecaprenyl-diphosphatase (267 aa).

The next 8 helical transmembrane spans lie at 1–21 (MTYF…FLPI), 39–59 (QGLA…VIYF), 83–103 (SNLA…GLLF), 111–131 (LRSA…LWWV), 149–169 (ALFL…RSGI), 189–209 (FLMS…KLAM), 218–238 (LLST…HFFL), and 246–266 (MMPF…WLAL).

This sequence belongs to the UppP family.

Its subcellular location is the cell inner membrane. It carries out the reaction di-trans,octa-cis-undecaprenyl diphosphate + H2O = di-trans,octa-cis-undecaprenyl phosphate + phosphate + H(+). In terms of biological role, catalyzes the dephosphorylation of undecaprenyl diphosphate (UPP). Confers resistance to bacitracin. The chain is Undecaprenyl-diphosphatase from Aliivibrio fischeri (strain ATCC 700601 / ES114) (Vibrio fischeri).